The primary structure comprises 332 residues: Holliday junction branch migration complex subunit RuvB (332 aa).

The interval 1–181 is large ATPase domain (RuvB-L); sequence MERIISELEM…FGVSHKMEYY (181 aa). Positions 20, 21, 62, 65, 66, 67, 171, 181, and 218 each coordinate ATP. T66 contributes to the Mg(2+) binding site. The interval 182–252 is small ATPAse domain (RuvB-S); sequence NENEIKSIII…SAKNALDMLG (71 aa). Residues 255–332 are head domain (RuvB-H); the sequence is SNGLDDLDRN…QHFKKVEVKI (78 aa). 3 residues coordinate DNA: R291, R310, and R315.

This sequence belongs to the RuvB family. Homohexamer. Forms an RuvA(8)-RuvB(12)-Holliday junction (HJ) complex. HJ DNA is sandwiched between 2 RuvA tetramers; dsDNA enters through RuvA and exits via RuvB. An RuvB hexamer assembles on each DNA strand where it exits the tetramer. Each RuvB hexamer is contacted by two RuvA subunits (via domain III) on 2 adjacent RuvB subunits; this complex drives branch migration. In the full resolvosome a probable DNA-RuvA(4)-RuvB(12)-RuvC(2) complex forms which resolves the HJ.

It localises to the cytoplasm. The enzyme catalyses ATP + H2O = ADP + phosphate + H(+). Its function is as follows. The RuvA-RuvB-RuvC complex processes Holliday junction (HJ) DNA during genetic recombination and DNA repair, while the RuvA-RuvB complex plays an important role in the rescue of blocked DNA replication forks via replication fork reversal (RFR). RuvA specifically binds to HJ cruciform DNA, conferring on it an open structure. The RuvB hexamer acts as an ATP-dependent pump, pulling dsDNA into and through the RuvAB complex. RuvB forms 2 homohexamers on either side of HJ DNA bound by 1 or 2 RuvA tetramers; 4 subunits per hexamer contact DNA at a time. Coordinated motions by a converter formed by DNA-disengaged RuvB subunits stimulates ATP hydrolysis and nucleotide exchange. Immobilization of the converter enables RuvB to convert the ATP-contained energy into a lever motion, pulling 2 nucleotides of DNA out of the RuvA tetramer per ATP hydrolyzed, thus driving DNA branch migration. The RuvB motors rotate together with the DNA substrate, which together with the progressing nucleotide cycle form the mechanistic basis for DNA recombination by continuous HJ branch migration. Branch migration allows RuvC to scan DNA until it finds its consensus sequence, where it cleaves and resolves cruciform DNA. The polypeptide is Holliday junction branch migration complex subunit RuvB (Fusobacterium nucleatum subsp. nucleatum (strain ATCC 25586 / DSM 15643 / BCRC 10681 / CIP 101130 / JCM 8532 / KCTC 2640 / LMG 13131 / VPI 4355)).